Reading from the N-terminus, the 254-residue chain is PSME3-interacting protein (254 aa).

Met-1 carries the N-acetylmethionine modification. Phosphoserine is present on Ser-17. Over residues 22–39 (DERRKRRQEEWEKVRKPE) the composition is skewed to basic and acidic residues. The segment at 22–52 (DERRKRRQEEWEKVRKPEDPEECPEEVYDPR) is disordered. An N6-acetyllysine modification is found at Lys-139. The interval 155-195 (GAVKHKSSESGNSVKRLKPDPEPDDKNQEPSSCKSLGNTSL) is disordered. Over residues 171 to 182 (LKPDPEPDDKNQ) the composition is skewed to basic and acidic residues. Polar residues predominate over residues 183 to 195 (EPSSCKSLGNTSL). The tract at residues 201-254 (HCPSAAVCIGILPGLGAYSGSSDSESSSDSEGTINATGKIVSSIFRTNTFLEAP) is interaction with PSME3. A phosphoserine; by CK2 mark is found at Ser-222 and Ser-228.

As to quaternary structure, interacts (via C-terminus) with both free and 20S proteasome-bound forms of the proteasome activator complex subunit PSME3; the interaction is direct. In terms of processing, phosphorylation by CK2 stabilizes the interaction with PSME3.

It is found in the nucleus. Functionally, promotes the association of the proteasome activator complex subunit PSME3 with the 20S proteasome and regulates its activity. Inhibits PSME3-mediated degradation of some proteasome substrates, probably by affecting their diffusion rate into the catalytic chamber of the proteasome. Also inhibits the interaction of PSME3 with COIL, inhibits accumulation of PSME3 in Cajal bodies and positively regulates the number of Cajal bodies in the nucleus. This is PSME3-interacting protein from Homo sapiens (Human).